Consider the following 77-residue polypeptide: Cold shock protein YdfK (77 aa).

This sequence to E.coli YnaE.

This is Cold shock protein YdfK (ydfK) from Escherichia coli (strain K12).